We begin with the raw amino-acid sequence, 87 residues long: Acyl carrier protein 3 (87 aa).

A Carrier domain is found at 1-79; it reads MSNPTVLDQI…DLVTYIEAAL (79 aa). An O-(pantetheine 4'-phosphoryl)serine modification is found at Ser39.

This sequence belongs to the acyl carrier protein (ACP) family. In terms of processing, 4'-phosphopantetheine is transferred from CoA to a specific serine of apo-ACP by AcpS. This modification is essential for activity because fatty acids are bound in thioester linkage to the sulfhydryl of the prosthetic group.

It is found in the cytoplasm. It participates in lipid metabolism; fatty acid biosynthesis. Functionally, carrier of the growing fatty acid chain in fatty acid biosynthesis. This Ralstonia nicotianae (strain ATCC BAA-1114 / GMI1000) (Ralstonia solanacearum) protein is Acyl carrier protein 3.